The primary structure comprises 556 residues: Formate--tetrahydrofolate ligase 1 (556 aa).

An ATP-binding site is contributed by 65–72; the sequence is TPAGEGKS.

This sequence belongs to the formate--tetrahydrofolate ligase family.

The enzyme catalyses (6S)-5,6,7,8-tetrahydrofolate + formate + ATP = (6R)-10-formyltetrahydrofolate + ADP + phosphate. It participates in one-carbon metabolism; tetrahydrofolate interconversion. This chain is Formate--tetrahydrofolate ligase 1, found in Streptococcus pyogenes serotype M4 (strain MGAS10750).